The following is a 1164-amino-acid chain: DNA-directed RNA polymerase 133 kDa polypeptide (1164 aa).

The protein belongs to the RNA polymerase beta chain family. As to quaternary structure, the DNA-dependent RNA polymerase used for intermediate and late genes expression consists of eight subunits 147 kDa, 133 kDa, 35 kDa, 30 kDa, 22 kDa, 19 kDa, 18 kDa and 7 kDa totalling more than 500 kDa in mass. The same holoenzyme, with the addition of the transcription-specificity factor RAP94, is used for early gene expression.

It is found in the virion. The enzyme catalyses RNA(n) + a ribonucleoside 5'-triphosphate = RNA(n+1) + diphosphate. Part of the DNA-dependent RNA polymerase which catalyzes the transcription of viral DNA into RNA using the four ribonucleoside triphosphates as substrates. Responsible for the transcription of early, intermediate and late genes. DNA-dependent RNA polymerase associates with the early transcription factor (ETF), itself composed of OPG118 and OPG133, thereby allowing the early genes transcription. Late transcription, and probably also intermediate transcription, require newly synthesized RNA polymerase. The polypeptide is DNA-directed RNA polymerase 133 kDa polypeptide (OPG151) (Homo sapiens (Human)).